Here is a 911-residue protein sequence, read N- to C-terminus: Gag-Pro polyprotein (911 aa).

The propeptide occupies 101–161; it reads AAVAQTEEIL…TKKPKRFPVL (61 aa). 2 stretches are compositionally biased toward polar residues: residues 113–125 and 140–152; these read NSQTDLTKTSQNP and KSSSLQDKGLSST. Residues 113 to 178 are disordered; it reads NSQTDLTKTS…DPEDPNPSEV (66 aa). Residues 202–205 carry the PPXY motif motif; sequence PPPY. The short motif at 210 to 213 is the PTAP/PSAP motif element; sequence PSAP. A coiled-coil region spans residues 216 to 257; the sequence is MAVVNPKEELKEKIAQLEEQIKLEELHQALISKLQKLKTGNE. A disordered region spans residues 260–279; it reads THPDTAGGLSRTPHWPGQHI. CCHC-type zinc fingers lie at residues 547-564 and 576-593; these read GCCFKCGKKGHFAKNCHE and GLCPRCKRGKHWANECKS. The interval 592–626 is disordered; it reads KSKTDNQGNPIPPHQGNRVEGPAPGPETSLWGSQL. The region spanning 780-856 is the Peptidase A2 domain; it reads FTGLIDTGAD…LPVNLWGRDL (77 aa). Aspartate 785 (protease; shared with dimeric partner) is an active-site residue. A G-patch domain is found at 867–911; that stretch reads PNDIVTAQMLAQGYSPGKGLGKKENGILHPIPNQGQSNKKGFGNF.

Homodimer. In terms of assembly, interacts with the reverse transcriptase/ribonuclease H. As to quaternary structure, homotrimer. Released by autocatalytic processing. The protease can undergo further autoprocessing to yield 2 shorter but enzymatically active forms of 12 kDa and 13 kDa without the GDP domain. the 12 kDa form is monomeric. In terms of processing, myristoylated. Myristoylation of the matrix (MA) domain mediates the transport and binding of Gag polyproteins to the host plasma membrane and is required for the assembly of viral particles. Post-translationally, specific enzymatic cleavages in vivo yield mature proteins.

The protein localises to the virion. The enzyme catalyses dUTP + H2O = dUMP + diphosphate + H(+). In terms of biological role, matrix protein. Functionally, nucleocapsid protein p14: Nucleocapsid protein. Capsid protein. Its function is as follows. The aspartyl protease mediates proteolytic cleavages of Gag and Gag-Pol polyproteins during or shortly after the release of the virion from the plasma membrane. Cleavages take place as an ordered, step-wise cascade to yield mature proteins. This process is called maturation. Displays maximal activity during the budding process just prior to particle release from the cell. In terms of biological role, enhances the activity of the reverse transcriptase. May be part of the mature RT. This chain is Gag-Pro polyprotein (gag-pro), found in Mason-Pfizer monkey virus (MPMV).